Consider the following 466-residue polypeptide: 3-isopropylmalate dehydratase large subunit (466 aa).

Residues Cys-347, Cys-407, and Cys-410 each coordinate [4Fe-4S] cluster.

The protein belongs to the aconitase/IPM isomerase family. LeuC type 1 subfamily. As to quaternary structure, heterodimer of LeuC and LeuD. [4Fe-4S] cluster serves as cofactor.

The catalysed reaction is (2R,3S)-3-isopropylmalate = (2S)-2-isopropylmalate. Its pathway is amino-acid biosynthesis; L-leucine biosynthesis; L-leucine from 3-methyl-2-oxobutanoate: step 2/4. Its function is as follows. Catalyzes the isomerization between 2-isopropylmalate and 3-isopropylmalate, via the formation of 2-isopropylmaleate. The protein is 3-isopropylmalate dehydratase large subunit of Blochmanniella floridana.